A 122-amino-acid polypeptide reads, in one-letter code: NADH-quinone oxidoreductase subunit A (122 aa).

Helical transmembrane passes span 10-30 (MIVL…LTLG), 66-86 (IFAL…PWAV), and 91-111 (LGLF…VGLA).

The protein belongs to the complex I subunit 3 family. NDH-1 is composed of 14 different subunits. Subunits NuoA, H, J, K, L, M, N constitute the membrane sector of the complex.

It is found in the cell membrane. It carries out the reaction a quinone + NADH + 5 H(+)(in) = a quinol + NAD(+) + 4 H(+)(out). Functionally, NDH-1 shuttles electrons from NADH, via FMN and iron-sulfur (Fe-S) centers, to quinones in the respiratory chain. The immediate electron acceptor for the enzyme in this species is believed to be a menaquinone. Couples the redox reaction to proton translocation (for every two electrons transferred, four hydrogen ions are translocated across the cytoplasmic membrane), and thus conserves the redox energy in a proton gradient. The sequence is that of NADH-quinone oxidoreductase subunit A from Bacillus cereus (strain ATCC 14579 / DSM 31 / CCUG 7414 / JCM 2152 / NBRC 15305 / NCIMB 9373 / NCTC 2599 / NRRL B-3711).